We begin with the raw amino-acid sequence, 103 residues long: Sperm-associated antigen 11A (103 aa).

The signal sequence occupies residues 1–24 (MRQRLLPSVTSLLLVALLFPGSSQ). An N-linked (GlcNAc...) asparagine glycan is attached at Asn29.

Belongs to the SPAG11 family.

Its subcellular location is the secreted. In terms of biological role, has antimicrobial activity against E.coli. Plays a role in the defense response in the male reproductive tract, contributing to sperm maturation, storage and protection. This Pan troglodytes (Chimpanzee) protein is Sperm-associated antigen 11A.